Here is a 279-residue protein sequence, read N- to C-terminus: MASSTSLAIVLHQSSNHDELFMKQTLQFSETLKDLKNLRKQLYSAAEYFETSYGKAEHKETVIETLKEYAAKAVVNTVDHLGSVSDKFNSFLSDNSTHFSTTHLRLSSLEQRMRLCRDYMGKSGTHQHLLLFQYPRHHKRYFFPQQGRGTSFSAGDDSHRFTSAVRSTILENLPNTARKANKTGSFSFAPIVHNNINNRTPNKRSNSPMRFPLLRSGSLLKRSSSPSQPKKPPLALPEPQRAISVSRNTEIVEIKQSSSRKGKKILMFKALMSMSKSRN.

Disordered regions lie at residues Val192–Phe211 and Leu219–Arg241. A compositionally biased stretch (polar residues) spans Asn194–Pro208. Over residues Leu219–Gln228 the composition is skewed to low complexity.

It belongs to the ABI family. In terms of assembly, binds SCAR.

It localises to the cytoplasm. Its subcellular location is the cytoskeleton. In terms of biological role, involved in regulation of actin and microtubule organization. Part of a WAVE complex that activates the Arp2/3 complex. The protein is Protein ABIL4 (ABIL4) of Arabidopsis thaliana (Mouse-ear cress).